We begin with the raw amino-acid sequence, 365 residues long: Alanine racemase (365 aa).

Lys-32 functions as the Proton acceptor; specific for D-alanine in the catalytic mechanism. Lys-32 carries the N6-(pyridoxal phosphate)lysine modification. Substrate is bound at residue Arg-128. Residue Tyr-257 is the Proton acceptor; specific for L-alanine of the active site. Met-305 contributes to the substrate binding site.

It belongs to the alanine racemase family. It depends on pyridoxal 5'-phosphate as a cofactor.

The catalysed reaction is L-alanine = D-alanine. Its pathway is amino-acid biosynthesis; D-alanine biosynthesis; D-alanine from L-alanine: step 1/1. In terms of biological role, catalyzes the interconversion of L-alanine and D-alanine. May also act on other amino acids. The sequence is that of Alanine racemase (alr) from Francisella tularensis subsp. holarctica (strain LVS).